The following is a 253-amino-acid chain: MLLIPAIDLKDGHCVRLEQGDMDKATVFSEDPGAMAAHWISKGARRLHLVDLNGAFAGKLKNESAIKSILKAVGNEIPVQLGGGIRDLETIERLLDDGISTVIIGTAAVKNPGFVQDACTAFPGHVMVGLDARDGKVATDGWSKITGHEVIDLAKKFEDWGVEAIIYTDIGRDGMLKGVNIEATMKLAQAIRIPVIASGGLSNNQDIEALCKAEEEGVMGVIAGRSIYAADLDLAAAQKYADELTLKYAKKII.

The Proton acceptor role is filled by aspartate 8. Aspartate 131 (proton donor) is an active-site residue.

This sequence belongs to the HisA/HisF family.

It localises to the cytoplasm. It carries out the reaction 1-(5-phospho-beta-D-ribosyl)-5-[(5-phospho-beta-D-ribosylamino)methylideneamino]imidazole-4-carboxamide = 5-[(5-phospho-1-deoxy-D-ribulos-1-ylimino)methylamino]-1-(5-phospho-beta-D-ribosyl)imidazole-4-carboxamide. Its pathway is amino-acid biosynthesis; L-histidine biosynthesis; L-histidine from 5-phospho-alpha-D-ribose 1-diphosphate: step 4/9. This chain is 1-(5-phosphoribosyl)-5-[(5-phosphoribosylamino)methylideneamino] imidazole-4-carboxamide isomerase, found in Polynucleobacter asymbioticus (strain DSM 18221 / CIP 109841 / QLW-P1DMWA-1) (Polynucleobacter necessarius subsp. asymbioticus).